Reading from the N-terminus, the 315-residue chain is Cysteine synthase (315 aa).

Residues asparagine 8 and arginine 35 each contribute to the hydrogen sulfide site. Residue lysine 42 is modified to N6-(pyridoxal phosphate)lysine. Pyridoxal 5'-phosphate is bound by residues asparagine 72 and 177-181 (GTGGT). Residue leucine 269 coordinates hydrogen sulfide. Pyridoxal 5'-phosphate is bound at residue serine 273.

It belongs to the cysteine synthase/cystathionine beta-synthase family. In terms of assembly, homodimer. Pyridoxal 5'-phosphate serves as cofactor.

It catalyses the reaction O-acetyl-L-serine + hydrogen sulfide = L-cysteine + acetate. It functions in the pathway amino-acid biosynthesis; L-cysteine biosynthesis; L-cysteine from L-serine: step 2/2. The polypeptide is Cysteine synthase (cysK) (Buchnera aphidicola subsp. Acyrthosiphon pisum (strain APS) (Acyrthosiphon pisum symbiotic bacterium)).